Consider the following 275-residue polypeptide: 2,3,4,5-tetrahydropyridine-2,6-dicarboxylate N-succinyltransferase (275 aa).

The substrate site is built by arginine 105 and aspartate 142.

The protein belongs to the transferase hexapeptide repeat family. As to quaternary structure, homotrimer.

It localises to the cytoplasm. The enzyme catalyses (S)-2,3,4,5-tetrahydrodipicolinate + succinyl-CoA + H2O = (S)-2-succinylamino-6-oxoheptanedioate + CoA. It participates in amino-acid biosynthesis; L-lysine biosynthesis via DAP pathway; LL-2,6-diaminopimelate from (S)-tetrahydrodipicolinate (succinylase route): step 1/3. This chain is 2,3,4,5-tetrahydropyridine-2,6-dicarboxylate N-succinyltransferase, found in Pectobacterium atrosepticum (strain SCRI 1043 / ATCC BAA-672) (Erwinia carotovora subsp. atroseptica).